Consider the following 135-residue polypeptide: uncharacterized protein (135 aa).

The protein belongs to the asp23 family.

This is an uncharacterized protein from Bacillus subtilis (strain 168).